A 329-amino-acid polypeptide reads, in one-letter code: Phenylalanine--tRNA ligase alpha subunit (329 aa).

Glu246 is a Mg(2+) binding site.

Belongs to the class-II aminoacyl-tRNA synthetase family. Phe-tRNA synthetase alpha subunit type 1 subfamily. As to quaternary structure, tetramer of two alpha and two beta subunits. Mg(2+) is required as a cofactor.

Its subcellular location is the cytoplasm. It carries out the reaction tRNA(Phe) + L-phenylalanine + ATP = L-phenylalanyl-tRNA(Phe) + AMP + diphosphate + H(+). In Helicobacter hepaticus (strain ATCC 51449 / 3B1), this protein is Phenylalanine--tRNA ligase alpha subunit.